The primary structure comprises 103 residues: NAD(P)H-quinone oxidoreductase subunit 4L, organellar chromatophore (103 aa).

Transmembrane regions (helical) follow at residues 3 to 23 (IMLEAYLTLAAVLFCIGVWGL), 32 to 52 (VLMSIELMLNAVNINLMAFSN), and 63 to 83 (VFAIFVITVAAAEAAVGLAIL).

This sequence belongs to the complex I subunit 4L family. In terms of assembly, NDH is composed of at least 16 different subunits, 5 of which are encoded in the nucleus.

Its subcellular location is the plastid. It is found in the organellar chromatophore thylakoid membrane. It catalyses the reaction a plastoquinone + NADH + (n+1) H(+)(in) = a plastoquinol + NAD(+) + n H(+)(out). The enzyme catalyses a plastoquinone + NADPH + (n+1) H(+)(in) = a plastoquinol + NADP(+) + n H(+)(out). In terms of biological role, NDH shuttles electrons from NAD(P)H:plastoquinone, via FMN and iron-sulfur (Fe-S) centers, to quinones in the photosynthetic chain and possibly in a chloroplast respiratory chain. The immediate electron acceptor for the enzyme in this species is believed to be plastoquinone. Couples the redox reaction to proton translocation, and thus conserves the redox energy in a proton gradient. This Paulinella chromatophora protein is NAD(P)H-quinone oxidoreductase subunit 4L, organellar chromatophore.